A 223-amino-acid chain; its full sequence is MNILIFGPNGSGKGTQGALAKKKYDLDHIESGAIFRKHIGGGTELGMKAKEYIDKGELVPDDITIPMVLDVLQSSGENGWLLDGFPRSIVQAEKLWEALEKDGVKLDFVIEILLPREVAKNRIMGRRLCENDPNHPNNKFIDAIKPDGDKCRVCGGALSERADDQDEDAINKRHDIYYDDNTGTVAAAYFYKDLAPKAGFKYIELNGEGTIEEIKDTLMGQLV.

10-15 (GSGKGT) lines the ATP pocket. An NMP region spans residues 30–59 (ESGAIFRKHIGGGTELGMKAKEYIDKGELV). AMP is bound by residues S31, R36, 57-59 (ELV), 84-87 (GFPR), and Q91. The interval 125–164 (GRRLCENDPNHPNNKFIDAIKPDGDKCRVCGGALSERADD) is LID. ATP is bound at residue R126. R161 and R173 together coordinate AMP. An ATP-binding site is contributed by G209.

The protein belongs to the adenylate kinase family. Monomer.

It is found in the cytoplasm. The catalysed reaction is AMP + ATP = 2 ADP. Its pathway is purine metabolism; AMP biosynthesis via salvage pathway; AMP from ADP: step 1/1. In terms of biological role, catalyzes the reversible transfer of the terminal phosphate group between ATP and AMP. Plays an important role in cellular energy homeostasis and in adenine nucleotide metabolism. The protein is Adenylate kinase of Maridesulfovibrio salexigens (strain ATCC 14822 / DSM 2638 / NCIMB 8403 / VKM B-1763) (Desulfovibrio salexigens).